The primary structure comprises 478 residues: Cytochrome c-552 (478 aa).

Residues 1–26 (MARKTLRARRFFSLIFPFFFMTSVYA) form the signal peptide. His-94 provides a ligand contact to heme c. 3 residues coordinate heme: Cys-122, Cys-125, and Lys-126. 6 residues coordinate heme c: Cys-160, Cys-163, His-164, Cys-209, Cys-212, and His-213. Ca(2+) contacts are provided by Glu-215, Tyr-216, Lys-261, and Gln-263. Tyr-216 serves as a coordination point for substrate. His-264 lines the substrate pocket. Heme c contacts are provided by His-275, Cys-282, Cys-285, His-286, His-301, Cys-314, Cys-317, His-318, and His-393.

The protein belongs to the cytochrome c-552 family. The cofactor is Ca(2+). Heme c serves as cofactor.

It is found in the periplasm. The enzyme catalyses 6 Fe(III)-[cytochrome c] + NH4(+) + 2 H2O = 6 Fe(II)-[cytochrome c] + nitrite + 8 H(+). Its pathway is nitrogen metabolism; nitrate reduction (assimilation). Functionally, catalyzes the reduction of nitrite to ammonia, consuming six electrons in the process. The polypeptide is Cytochrome c-552 (Salmonella arizonae (strain ATCC BAA-731 / CDC346-86 / RSK2980)).